A 683-amino-acid polypeptide reads, in one-letter code: DNA ligase (683 aa).

NAD(+)-binding positions include 36 to 40 (DAVYD), 85 to 86 (SL), and glutamate 121. Residue lysine 123 is the N6-AMP-lysine intermediate of the active site. Arginine 144, glutamate 180, lysine 296, and lysine 320 together coordinate NAD(+). 4 residues coordinate Zn(2+): cysteine 413, cysteine 416, cysteine 431, and cysteine 437. Positions 605–683 (PSEGHLSGKV…ESGWRVLAGL (79 aa)) constitute a BRCT domain.

This sequence belongs to the NAD-dependent DNA ligase family. LigA subfamily. Requires Mg(2+) as cofactor. Mn(2+) is required as a cofactor.

It catalyses the reaction NAD(+) + (deoxyribonucleotide)n-3'-hydroxyl + 5'-phospho-(deoxyribonucleotide)m = (deoxyribonucleotide)n+m + AMP + beta-nicotinamide D-nucleotide.. Functionally, DNA ligase that catalyzes the formation of phosphodiester linkages between 5'-phosphoryl and 3'-hydroxyl groups in double-stranded DNA using NAD as a coenzyme and as the energy source for the reaction. It is essential for DNA replication and repair of damaged DNA. The polypeptide is DNA ligase (Gluconobacter oxydans (strain 621H) (Gluconobacter suboxydans)).